The chain runs to 147 residues: Peptide methionine sulfoxide reductase MsrB (147 aa).

A compositionally biased stretch (basic and acidic residues) spans 1–11 (MPKIVKKEPKF). Residues 1-25 (MPKIVKKEPKFVEQSGKKVTKSDEQ) form a disordered region. Residues 23-145 (DEQWREQLSD…NSVSLIFNKS (123 aa)) enclose the MsrB domain. 4 residues coordinate Zn(2+): Cys62, Cys65, Cys111, and Cys114. Cys134 functions as the Nucleophile in the catalytic mechanism.

This sequence belongs to the MsrB Met sulfoxide reductase family. The cofactor is Zn(2+).

The catalysed reaction is L-methionyl-[protein] + [thioredoxin]-disulfide + H2O = L-methionyl-(R)-S-oxide-[protein] + [thioredoxin]-dithiol. In Vibrio parahaemolyticus serotype O3:K6 (strain RIMD 2210633), this protein is Peptide methionine sulfoxide reductase MsrB.